The primary structure comprises 465 residues: tRNA modification GTPase MnmE (465 aa).

The (6S)-5-formyl-5,6,7,8-tetrahydrofolate site is built by arginine 21, glutamate 85, and lysine 124. The region spanning 220-387 (GVPVAIIGET…LQQRLVAAAH (168 aa)) is the TrmE-type G domain. Asparagine 230 contacts K(+). GTP is bound by residues 230–235 (NAGKST), 249–255 (SDIHGTT), and 274–277 (DTAG). Mg(2+) is bound at residue serine 234. K(+) contacts are provided by serine 249, isoleucine 251, and threonine 254. Threonine 255 is a Mg(2+) binding site. Lysine 465 is a binding site for (6S)-5-formyl-5,6,7,8-tetrahydrofolate.

This sequence belongs to the TRAFAC class TrmE-Era-EngA-EngB-Septin-like GTPase superfamily. TrmE GTPase family. Homodimer. Heterotetramer of two MnmE and two MnmG subunits. The cofactor is K(+).

The protein localises to the cytoplasm. Exhibits a very high intrinsic GTPase hydrolysis rate. Involved in the addition of a carboxymethylaminomethyl (cmnm) group at the wobble position (U34) of certain tRNAs, forming tRNA-cmnm(5)s(2)U34. This chain is tRNA modification GTPase MnmE, found in Bacteroides fragilis (strain YCH46).